The primary structure comprises 211 residues: ATP-dependent Clp protease proteolytic subunit (211 aa).

Catalysis depends on serine 114, which acts as the Nucleophile. Histidine 139 is a catalytic residue.

This sequence belongs to the peptidase S14 family. Fourteen ClpP subunits assemble into 2 heptameric rings which stack back to back to give a disk-like structure with a central cavity, resembling the structure of eukaryotic proteasomes.

It is found in the cytoplasm. It carries out the reaction Hydrolysis of proteins to small peptides in the presence of ATP and magnesium. alpha-casein is the usual test substrate. In the absence of ATP, only oligopeptides shorter than five residues are hydrolyzed (such as succinyl-Leu-Tyr-|-NHMec, and Leu-Tyr-Leu-|-Tyr-Trp, in which cleavage of the -Tyr-|-Leu- and -Tyr-|-Trp bonds also occurs).. In terms of biological role, cleaves peptides in various proteins in a process that requires ATP hydrolysis. Has a chymotrypsin-like activity. Plays a major role in the degradation of misfolded proteins. This Pseudomonas fluorescens (strain Pf0-1) protein is ATP-dependent Clp protease proteolytic subunit.